Here is a 141-residue protein sequence, read N- to C-terminus: Hemoglobin subunit alpha (141 aa).

The 141-residue stretch at V1–R141 folds into the Globin domain. At S3 the chain carries Phosphoserine. The residue at position 7 (K7) is an N6-succinyllysine. T8 is modified (phosphothreonine). K11 is subject to N6-succinyllysine. Residue K16 is modified to N6-acetyllysine; alternate. At K16 the chain carries N6-succinyllysine; alternate. Residue S35 is modified to Phosphoserine. N6-succinyllysine is present on K40. S49 carries the phosphoserine modification. H58 serves as a coordination point for O2. A heme b-binding site is contributed by H87. Phosphoserine is present on S102. T108 carries the phosphothreonine modification. Residues S124 and S131 each carry the phosphoserine modification. A phosphothreonine mark is found at T134 and T137. S138 bears the Phosphoserine mark.

The protein belongs to the globin family. As to quaternary structure, heterotetramer of two alpha chains and two beta chains. Red blood cells.

Functionally, involved in oxygen transport from the lung to the various peripheral tissues. In Sciurus carolinensis (Eastern gray squirrel), this protein is Hemoglobin subunit alpha.